An 85-amino-acid chain; its full sequence is Large ribosomal subunit protein bL27 (85 aa).

Positions 1–22 are disordered; it reads MAKTKAGGSTRNGRDSKGRRLG.

The protein belongs to the bacterial ribosomal protein bL27 family.

This Mycoplasmopsis pulmonis (strain UAB CTIP) (Mycoplasma pulmonis) protein is Large ribosomal subunit protein bL27.